Consider the following 124-residue polypeptide: Small ribosomal subunit protein uS11 (124 aa).

The protein belongs to the universal ribosomal protein uS11 family. As to quaternary structure, part of the 30S ribosomal subunit. Interacts with proteins S7 and S18. Binds to IF-3.

Functionally, located on the platform of the 30S subunit, it bridges several disparate RNA helices of the 16S rRNA. Forms part of the Shine-Dalgarno cleft in the 70S ribosome. The sequence is that of Small ribosomal subunit protein uS11 from Anaplasma marginale (strain St. Maries).